Consider the following 229-residue polypeptide: DNA mismatch repair protein MutH (229 aa).

It belongs to the MutH family.

The protein resides in the cytoplasm. Sequence-specific endonuclease that cleaves unmethylated GATC sequences. It is involved in DNA mismatch repair. The polypeptide is DNA mismatch repair protein MutH (Escherichia coli O127:H6 (strain E2348/69 / EPEC)).